A 260-amino-acid chain; its full sequence is Adenosylcobinamide-GDP ribazoletransferase (260 aa).

The next 7 membrane-spanning stretches (helical) occupy residues 42–62, 64–84, 117–137, 144–164, 192–212, 214–234, and 240–260; these read PLAG…ANAI, LPPL…TGAL, FAAL…MAII, YALL…LAFW, GLGL…VALI, ALVL…AKIG, and TLGA…VMAL.

Belongs to the CobS family. It depends on Mg(2+) as a cofactor.

It is found in the cell inner membrane. It catalyses the reaction alpha-ribazole + adenosylcob(III)inamide-GDP = adenosylcob(III)alamin + GMP + H(+). It carries out the reaction alpha-ribazole 5'-phosphate + adenosylcob(III)inamide-GDP = adenosylcob(III)alamin 5'-phosphate + GMP + H(+). Its pathway is cofactor biosynthesis; adenosylcobalamin biosynthesis; adenosylcobalamin from cob(II)yrinate a,c-diamide: step 7/7. Joins adenosylcobinamide-GDP and alpha-ribazole to generate adenosylcobalamin (Ado-cobalamin). Also synthesizes adenosylcobalamin 5'-phosphate from adenosylcobinamide-GDP and alpha-ribazole 5'-phosphate. This Brucella melitensis biotype 1 (strain ATCC 23456 / CCUG 17765 / NCTC 10094 / 16M) protein is Adenosylcobinamide-GDP ribazoletransferase.